Consider the following 256-residue polypeptide: MTDLKKAAQRAIELMDLTTLNDDDTDQKVIDLCHKAKTAAGNTAAICIYPRFIPIARKTLDEIGAEDIQIATVTNFPHGNDDIAIAVLETRAAVAYGADEVDVVFPYRALMEGNETIGFELVKACKEACGEVLLKVIIESGVLADPALIRRASELSIDAGADFIKTSTGKVPVNATLEAAEIMLTVISEKNTQVGFKPAGGVRDAAQAAEFLGVAERILGADWVSPRTFRFGASSLLNSLLHTLELADAPKPTQGY.

D102 functions as the Proton donor/acceptor in the catalytic mechanism. The Schiff-base intermediate with acetaldehyde role is filled by K165. K197 serves as the catalytic Proton donor/acceptor.

The protein belongs to the DeoC/FbaB aldolase family. DeoC type 2 subfamily.

The protein localises to the cytoplasm. The enzyme catalyses 2-deoxy-D-ribose 5-phosphate = D-glyceraldehyde 3-phosphate + acetaldehyde. It functions in the pathway carbohydrate degradation; 2-deoxy-D-ribose 1-phosphate degradation; D-glyceraldehyde 3-phosphate and acetaldehyde from 2-deoxy-alpha-D-ribose 1-phosphate: step 2/2. Functionally, catalyzes a reversible aldol reaction between acetaldehyde and D-glyceraldehyde 3-phosphate to generate 2-deoxy-D-ribose 5-phosphate. The sequence is that of Deoxyribose-phosphate aldolase from Shewanella baltica (strain OS223).